The sequence spans 266 residues: 3-oxoadipate enol-lactonase 1 (266 aa).

In terms of domain architecture, AB hydrolase-1 spans 28 to 250 (PAIVFSNSLG…DASHLSNIEQ (223 aa)).

It carries out the reaction (4,5-dihydro-5-oxofuran-2-yl)-acetate + H2O = 3-oxoadipate + H(+). It functions in the pathway aromatic compound metabolism; beta-ketoadipate pathway; 3-oxoadipate from 5-oxo-4,5-dihydro-2-furylacetate: step 1/1. This chain is 3-oxoadipate enol-lactonase 1 (pcaD), found in Acinetobacter baylyi (strain ATCC 33305 / BD413 / ADP1).